Here is a 576-residue protein sequence, read N- to C-terminus: Nuclear receptor subfamily 1 group D member 2 (576 aa).

The tract at residues 1–60 (MELNAGGVIAYISSSSSASSPASCHSEGSENSFQSSSSSVPSSPNSSNCDANGNPKNADI) is required for phosphorylation by CSNK1E and cytoplasmic localization. The tract at residues 1–99 (MELNAGGVIA…HSGMTKFSGM (99 aa)) is modulating. Residues 13–47 (SSSSSASSPASCHSEGSENSFQSSSSSVPSSPNSS) are compositionally biased toward low complexity. Residues 13–90 (SSSSSASSPA…TSAPGMTKSH (78 aa)) form a disordered region. The residue at position 46 (Ser-46) is a Phosphoserine; by GSK3-beta. Residues 100-176 (VLLCKVCGDV…VGMSRDAVRF (77 aa)) constitute a DNA-binding region (nuclear receptor). 2 NR C4-type zinc fingers span residues 103 to 123 (CKVC…CEGC) and 140 to 164 (CLKN…FKKC). 2 positions are modified to N6-acetyllysine; by KAT5: Lys-162 and Lys-163. Disordered regions lie at residues 215–246 (QHDQ…SDFA) and 263–282 (LYNQ…QRGE). Basic and acidic residues-rich tracts occupy residues 227 to 237 (LRPKSQLEQEN) and 263 to 272 (LYNQEHRENS). Disulfide bonds link Cys-334/Cys-340 and Cys-371/Cys-381. The region spanning 366-576 (RNSYLCNTGG…EELLAFKVHP (211 aa)) is the NR LBD domain. Residues Cys-381 and His-565 each coordinate heme. Residues 394 to 576 (SGHEIWEEFS…EELLAFKVHP (183 aa)) are interaction with ZNHIT1.

Belongs to the nuclear hormone receptor family. NR1 subfamily. Binds DNA as a monomer or a homodimer. Interacts with NCOA5 coactivator, leading to a strong increase of transcription of target genes. Interacts (via N-terminus) with KAT5. Interacts (via C-terminus) with HDAC1. Interacts with ZNHIT1. Interacts with SIAH2. Deacetylated by HDAC1. Acetylation and deacetylation regulate its transcriptional regulatory activity. In terms of processing, under more reducing intracellular redox conditions, Cys-381 is in its heme-bound state, which is optimal for recruitment of the NCOR1/HDAC3 corepressor complex and repression of target genes. When subjected to oxidative stress conditions, Cys-381 undergoes oxidation to form a disulfide bridge with Cys-371, also triggering a ligand switch that results in release of bound heme and derepression of target genes. Post-translationally, ubiquitinated by SIAH2; leading to its proteasomal degradation. Phosphorylated by CSNK1E; phosphorylation enhances its cytoplasmic localization. Ubiquitous. Expressed abundantly in skeletal muscle and brown adipose tissue. Expressed during skeletal muscle myogenesis.

The protein resides in the nucleus. The protein localises to the cytoplasm. With respect to regulation, the heme-bound form can bind gaseous signaling molecules such as CO and nitric oxide (NO) and NO can reverse its transcriptional repressor activity. In terms of biological role, transcriptional repressor which coordinates circadian rhythm and metabolic pathways in a heme-dependent manner. Integral component of the complex transcription machinery that governs circadian rhythmicity and forms a critical negative limb of the circadian clock by directly repressing the expression of core clock components BMAL1 and CLOCK. Also regulates genes involved in metabolic functions, including lipid metabolism and the inflammatory response. Acts as a receptor for heme which stimulates its interaction with the NCOR1/HDAC3 corepressor complex, enhancing transcriptional repression. Recognizes two classes of DNA response elements within the promoter of its target genes and can bind to DNA as either monomers or homodimers, depending on the nature of the response element. Binds as a monomer to a response element composed of the consensus half-site motif 5'-[A/G]GGTCA-3' preceded by an A/T-rich 5' sequence (RevRE), or as a homodimer to a direct repeat of the core motif spaced by two nuclegotides (RevDR-2). Acts as a potent competitive repressor of ROR alpha (RORA) function and also negatively regulates the expression of NR1D1. Regulates lipid and energy homeostasis in the skeletal muscle via repression of genes involved in lipid metabolism and myogenesis including: CD36, FABP3, FABP4, UCP3, SCD1 and MSTN. Regulates hepatic lipid metabolism via the repression of APOC3. Represses gene expression at a distance in macrophages by inhibiting the transcription of enhancer-derived RNAs (eRNAs). In addition to its activity as a repressor, can also act as a transcriptional activator. Acts as a transcriptional activator of the sterol regulatory element-binding protein 1 (SREBF1) and the inflammatory mediator interleukin-6 (IL6) in the skeletal muscle. Plays a role in the regulation of circadian sleep/wake cycle; essential for maintaining wakefulness during the dark phase or active period. Key regulator of skeletal muscle mitochondrial function; negatively regulates the skeletal muscle expression of core clock genes and genes involved in mitochondrial biogenesis, fatty acid beta-oxidation and lipid metabolism. May play a role in the circadian control of neutrophilic inflammation in the lung. The polypeptide is Nuclear receptor subfamily 1 group D member 2 (Mus musculus (Mouse)).